A 103-amino-acid polypeptide reads, in one-letter code: Co-chaperonin GroES (103 aa).

This sequence belongs to the GroES chaperonin family. In terms of assembly, heptamer of 7 subunits arranged in a ring. Interacts with the chaperonin GroEL.

Its subcellular location is the cytoplasm. In terms of biological role, together with the chaperonin GroEL, plays an essential role in assisting protein folding. The GroEL-GroES system forms a nano-cage that allows encapsulation of the non-native substrate proteins and provides a physical environment optimized to promote and accelerate protein folding. GroES binds to the apical surface of the GroEL ring, thereby capping the opening of the GroEL channel. This chain is Co-chaperonin GroES, found in Dinoroseobacter shibae (strain DSM 16493 / NCIMB 14021 / DFL 12).